The following is a 456-amino-acid chain: Trigger factor (456 aa).

The PPIase FKBP-type domain occupies 192 to 277 (GDTVVIDFVG…IHEVKTKEVP (86 aa)).

Belongs to the FKBP-type PPIase family. Tig subfamily.

The protein resides in the cytoplasm. It catalyses the reaction [protein]-peptidylproline (omega=180) = [protein]-peptidylproline (omega=0). Its function is as follows. Involved in protein export. Acts as a chaperone by maintaining the newly synthesized protein in an open conformation. Functions as a peptidyl-prolyl cis-trans isomerase. This chain is Trigger factor, found in Streptococcus pyogenes serotype M12 (strain MGAS9429).